A 284-amino-acid polypeptide reads, in one-letter code: Probable tRNA-splicing endonuclease subunit sen34 (284 aa).

Active-site residues include Y206, H214, and K245.

This sequence belongs to the tRNA-intron endonuclease family. Heterotetramer composed of sen2, sen15, sen34 and sen54. Interacts directly with sen15.

The catalysed reaction is pretRNA = a 3'-half-tRNA molecule with a 5'-OH end + a 5'-half-tRNA molecule with a 2',3'-cyclic phosphate end + an intron with a 2',3'-cyclic phosphate and a 5'-hydroxyl terminus.. Functionally, constitutes one of the two catalytic subunit of the tRNA-splicing endonuclease complex, a complex responsible for identification and cleavage of the splice sites in pre-tRNA. It cleaves pre-tRNA at the 5'- and 3'-splice sites to release the intron. The products are an intron and two tRNA half-molecules bearing 2',3'-cyclic phosphate and 5'-OH termini. There are no conserved sequences at the splice sites, but the intron is invariably located at the same site in the gene, placing the splice sites an invariant distance from the constant structural features of the tRNA body. It probably carries the active site for 3'-splice site cleavage. This chain is Probable tRNA-splicing endonuclease subunit sen34 (sen34), found in Schizosaccharomyces pombe (strain 972 / ATCC 24843) (Fission yeast).